The primary structure comprises 315 residues: Petrobactin import system permease protein YclO (315 aa).

The next 9 helical transmembrane spans lie at 7–27 (IALLVGLAIVCIGLFLFYDLG), 40–60 (VAAIVLTGGAIAFSTMIFQTI), 76–96 (LYMLIQTGIIFLFGSANMVIM), 100–120 (INFIISVLLMILFSLVLYQIM), 128–148 (IFFLLLIGIVFGTLFSSLSSF), 172–192 (INTDLLWLAFIIFLLTGVYVW), 223–243 (LIVVAILVSVSTALVGPIMFL), 262–282 (YLIAGSVFISIIALVGGQFVV), and 288–308 (FSTTLSVIINFAGGIYFIYLL).

This sequence belongs to the binding-protein-dependent transport system permease family. FecCD subfamily. As to quaternary structure, the complex is composed of two ATP-binding proteins (YclP), two transmembrane proteins (YclN and YclO) and a solute-binding protein (YclQ).

Its subcellular location is the cell membrane. Part of the ABC transporter complex YclNOPQ involved in uptake of ferric-petrobactin. Petrobactin is a photoreactive 3,4-catecholate siderophore produced by many members of the B.cereus group, including B.anthracis. Probably responsible for the translocation of the substrate across the membrane. This Bacillus subtilis (strain 168) protein is Petrobactin import system permease protein YclO (yclO).